We begin with the raw amino-acid sequence, 590 residues long: Leishmanolysin (590 aa).

An N-terminal signal peptide occupies residues 1 to 39; the sequence is MSVDSSSTHRHRSVAARLVRLAAAGAAVIAAVGTAAAWA. Positions 40–87 are cleaved as a propeptide — activation peptide; that stretch reads HAGAVQHRCIHDAMQARVRQSVARHHTAPGAVSAVGLSYVTLGAAPTV. 2 disulfides stabilise this stretch: Cys-112–Cys-129 and Cys-178–Cys-217. Residue His-251 participates in Zn(2+) binding. The active site involves Glu-252. His-255 is a binding site for Zn(2+). N-linked (GlcNAc...) asparagine glycosylation occurs at Asn-287. 7 disulfides stabilise this stretch: Cys-301/Cys-373, Cys-380/Cys-443, Cys-393/Cys-412, Cys-402/Cys-477, Cys-454/Cys-498, Cys-503/Cys-553, and Cys-523/Cys-546. Position 321 (His-321) interacts with Zn(2+). A lipid anchor (GPI-anchor amidated asparagine) is attached at Asn-565. The propeptide at 566–590 is removed in mature form; the sequence is AAAGRRGPRAAATALLVAALLAVAL.

Belongs to the peptidase M8 family. Requires Zn(2+) as cofactor.

It is found in the cell membrane. It carries out the reaction Preference for hydrophobic residues at P1 and P1' and basic residues at P2' and P3'. A model nonapeptide is cleaved at -Ala-Tyr-|-Leu-Lys-Lys-.. Its function is as follows. Has an integral role during the infection of macrophages in the mammalian host. This chain is Leishmanolysin (gp63), found in Leishmania donovani.